Reading from the N-terminus, the 6857-residue chain is Replicase polyprotein 1ab (6857 aa).

One can recognise a Macro domain in the interval 1679 to 1860 (FEQYYEFKIG…QYNQAFAVIK (182 aa)). The disordered stretch occupies residues 2158 to 2191 (QVGQGGQQDGQVDQQIKESEQVVEPSAPSGQESP). The next 10 membrane-spanning stretches (helical) occupy residues 2303 to 2323 (LTYN…FGVL), 2330 to 2350 (TPFY…LMIW), 2385 to 2405 (LVQW…DYVV), 2535 to 2555 (LFYS…YVLF), 2639 to 2659 (VTVS…VVVL), 2664 to 2684 (FIWF…IILF), 2889 to 2909 (TTLV…LMVG), 3057 to 3077 (IISP…FLIL), 3106 to 3126 (VLFV…LALW), and 3142 to 3162 (LFIL…GFVF). The segment at 2303–2683 (LTYNIKFKLI…VMMPVFVIIL (381 aa)) is HD1. The segment at 2889–3162 (TTLVIVMGVL…FLFMVGGFVF (274 aa)) is HD2. Residues His-3304, Glu-3347, and Ser-3416 each act as charge relay system; for 3C-like serine proteinase activity in the active site. Residues 3555–3738 (HLHFIFSIYF…IVIVLSFRVF (184 aa)) are HD3. 7 consecutive transmembrane segments (helical) span residues 3556 to 3575 (LHFI…YWWL), 3580 to 3602 (SVVL…NVLF), 3611 to 3631 (LAVT…LGFL), 3640 to 3660 (SLII…VVNV), 3663 to 3683 (AIFV…LGIV), 3698 to 3718 (AVFT…LLLF), and 3723 to 3738 (LMSF…FRVF). Positions 4566-4797 (DFKLLRGAWS…ANEMEIPTDY (232 aa)) constitute a NiRAN domain. Residues 5105–5256 (FDVFGSDYTK…FSKPEALKIF (152 aa)) form the RdRp catalytic domain. In terms of domain architecture, CV ZBD spans 5413 to 5528 (FDKVCFCCPN…NGVAQLLTSV (116 aa)). Zn(2+)-binding residues include Cys-5417, Cys-5420, Cys-5428, Cys-5431, Cys-5438, Cys-5441, His-5445, His-5451, Cys-5460, Cys-5462, Cys-5483, and Cys-5486. The region spanning 5633–5812 (NQPWRLATCF…LQLATQKRYL (180 aa)) is the (+)RNA virus helicase ATP-binding domain. In terms of domain architecture, (+)RNA virus helicase C-terminal spans 5813–5972 (TACYRCPPQI…FGMEKQSDFN (160 aa)). An ExoN domain is found at 5970 to 6183 (DFNIIPEVSS…YLASYEAAFK (214 aa)). Catalysis depends on residues Asp-5984, Glu-5986, and Asp-6085. Residues His-6149, Cys-6153, and His-6157 each coordinate Zn(2+). Active-site residues include His-6161 and Asp-6166. Cys-6172 lines the Zn(2+) pocket. Residues 6451 to 6591 (LPDTLFSTGR…GEDDIQTFYP (141 aa)) enclose the NendoU domain. Active-site residues include His-6487, His-6504, Lys-6536, Lys-6633, Asp-6709, Lys-6737, and Glu-6771. Residues 6593 to 6857 (KDFVRSYYEW…EVPMLCQMEH (265 aa)) enclose the Nidovirus-type SAM-dependent 2'-O-MTase domain.

In terms of processing, specific enzymatic cleavages in vivo by its own protease yield mature proteins. 3CL-PRO is autocatalytically processed.

Its subcellular location is the host membrane. It catalyses the reaction RNA(n) + a ribonucleoside 5'-triphosphate = RNA(n+1) + diphosphate. The enzyme catalyses ATP + H2O = ADP + phosphate + H(+). Functionally, the 3C-like serine proteinase is responsible for the majority of cleavages. The helicase which contains a zinc finger structure displays RNA and DNA duplex-unwinding activities with 5' to 3' polarity. In terms of biological role, acts on both ssRNA and dsRNA in a 3' to 5' direction. Its function is as follows. NendoU is a Mn(2+)-dependent, uridylate-specific enzyme, which leaves 2'-3'-cyclic phosphates 5' to the cleaved bond. The chain is Replicase polyprotein 1ab (rep) from Equus caballus (Horse).